Consider the following 239-residue polypeptide: 2,3,4,5-tetrahydropyridine-2,6-dicarboxylate N-acetyltransferase (239 aa).

Belongs to the transferase hexapeptide repeat family. DapH subfamily.

The catalysed reaction is (S)-2,3,4,5-tetrahydrodipicolinate + acetyl-CoA + H2O = L-2-acetamido-6-oxoheptanedioate + CoA. Its pathway is amino-acid biosynthesis; L-lysine biosynthesis via DAP pathway; LL-2,6-diaminopimelate from (S)-tetrahydrodipicolinate (acetylase route): step 1/3. Its function is as follows. Catalyzes the transfer of an acetyl group from acetyl-CoA to tetrahydrodipicolinate. The chain is 2,3,4,5-tetrahydropyridine-2,6-dicarboxylate N-acetyltransferase from Staphylococcus aureus (strain bovine RF122 / ET3-1).